We begin with the raw amino-acid sequence, 192 residues long: Adenine phosphoribosyltransferase 2 (192 aa).

It belongs to the purine/pyrimidine phosphoribosyltransferase family. In terms of assembly, homodimer.

It is found in the cytoplasm. It carries out the reaction AMP + diphosphate = 5-phospho-alpha-D-ribose 1-diphosphate + adenine. It participates in purine metabolism; AMP biosynthesis via salvage pathway; AMP from adenine: step 1/1. Catalyzes a salvage reaction resulting in the formation of AMP, that is energically less costly than de novo synthesis. May contribute to the recycling of adenine into adenylate nucleotides and the inactivation of cytokinins by phosphoribosylation. Possesses low activity toward adenine and cytokinins. The chain is Adenine phosphoribosyltransferase 2 (APT2) from Arabidopsis thaliana (Mouse-ear cress).